The following is a 271-amino-acid chain: MSNEVERVYPRLLDFVRKKYVSKNLLRVTLTGEDLIGFPEDQNGSHIKVFFPNQASGILQLPIREGDKVIWPEHKPVPRAYTVRQYRAQSNELDIDFVVHGEGTPGGGWALKAQTGSQLGLIGPGGPDPLIEPADWHIMAGDLSAVPAISAILEKMPSQAKGYVFLEVDDIEDKHDISHPEQMVIKWLVRDPNQAQPVLAMAIEQLPVPQGAESLSAFVAGENESVIACRKILRNEYRIARDKIYAIPYWKRGKNEEAYHEERHVVMDEEF.

An FAD-binding FR-type domain is found at 8–131; the sequence is VYPRLLDFVR…IGPGGPDPLI (124 aa).

Belongs to the SIP oxidoreductase family. Requires FAD as cofactor.

The protein localises to the cytoplasm. The enzyme catalyses 2 a Fe(II)-siderophore + NAD(+) + H(+) = 2 a Fe(III)-siderophore + NADH. Its function is as follows. Ferric-siderophore reductase involved in iron removal from the siderophores after their transport into the cell. Involved in intracellular removal of iron from iron-vibriobactin complex. Vibriobactin is an iron-chelating compound involved in the transport of iron from the bacterial environment into the cell cytoplasm. Ferric-vibriobactin reductase catalyzing the reduction of Fe(3+)-vibriobactin, a catecholate siderophore synthesized by V.cholerae. The chain is Ferric vibriobactin reductase ViuB from Vibrio cholerae serotype O1 (strain ATCC 39541 / Classical Ogawa 395 / O395).